Consider the following 359-residue polypeptide: Peptide chain release factor 1 (359 aa).

Residue Gln-235 is modified to N5-methylglutamine.

The protein belongs to the prokaryotic/mitochondrial release factor family. Methylated by PrmC. Methylation increases the termination efficiency of RF1.

Its subcellular location is the cytoplasm. Peptide chain release factor 1 directs the termination of translation in response to the peptide chain termination codons UAG and UAA. The polypeptide is Peptide chain release factor 1 (Nitrosomonas europaea (strain ATCC 19718 / CIP 103999 / KCTC 2705 / NBRC 14298)).